The following is an 88-amino-acid chain: Hemotin (88 aa).

The Lumenal portion of the chain corresponds to 1-14; sequence MDCFKVFEVVFQSE. Residues 15 to 37 traverse the membrane as a helical segment; it reads INPLLLIPAVATIALTLCCYCYH. The Cytoplasmic portion of the chain corresponds to 38-88; sequence GYQWIRDRRTARIEEQQAQLPLPLSRISITPGCSMVATTKLTHSRNSVDIY.

In terms of assembly, interacts with 14-3-3zeta. In terms of tissue distribution, expressed in hemocytes.

The protein localises to the early endosome membrane. In terms of biological role, negatively regulates early endosome maturation by binding to and repressing the activity of 14-3-3zeta which prevents the 14-3-3zeta-mediated activation of phosphoinositide 3-kinase Pi3K68D. This, in turn, inhibits the Pi3K68D-mediated conversion of phosphatidylinositol to phosphatidylinositol-3-phosphate and prevents progression of early endosomes through the maturation process which regulates subsequent steps of phagocytic processing. The chain is Hemotin from Drosophila melanogaster (Fruit fly).